We begin with the raw amino-acid sequence, 473 residues long: Phenolic acid decarboxylase (473 aa).

Mn(2+) is bound by residues Asn160, His182, and Glu224. Prenylated FMN is bound by residues 160–165 (NVGIYR) and 181–182 (QH). The active-site Proton donor is Glu273.

The protein belongs to the UbiD family. YclC subfamily. The cofactor is prenylated FMN. Mn(2+) is required as a cofactor.

It carries out the reaction 4-hydroxybenzoate + H(+) = phenol + CO2. The catalysed reaction is vanillate + H(+) = guaiacol + CO2. Functionally, involved in the non-oxidative decarboxylation and detoxification of phenolic derivatives under both aerobic and anaerobic conditions. Phenolic acid decarboxylase that catalyzes the reversible decarboxylation of 4-hydroxybenzoate and vanillate. Could also catalyze the decarboxylation of salicylate. Is not active on di- and tri-hydroxybenzoate derivatives. This Bacillus subtilis (strain 168) protein is Phenolic acid decarboxylase.